The following is a 162-amino-acid chain: Beta-lactoglobulin-3 (162 aa).

Cystine bridges form between cysteine 66/cysteine 160 and cysteine 106/cysteine 119.

This sequence belongs to the calycin superfamily. Lipocalin family. As to quaternary structure, monomer.

The protein resides in the secreted. Lactoglobulin is the primary component of whey, it binds retinol and is probably involved in the transport of that molecule. This Felis catus (Cat) protein is Beta-lactoglobulin-3 (LGB3).